A 345-amino-acid polypeptide reads, in one-letter code: Alanine racemase (345 aa).

Residue Lys-33 is the Proton acceptor; specific for D-alanine of the active site. Lys-33 carries the N6-(pyridoxal phosphate)lysine modification. Arg-128 contributes to the substrate binding site. Tyr-242 serves as the catalytic Proton acceptor; specific for L-alanine. Position 291 (Met-291) interacts with substrate.

Belongs to the alanine racemase family. It depends on pyridoxal 5'-phosphate as a cofactor.

It carries out the reaction L-alanine = D-alanine. It functions in the pathway amino-acid biosynthesis; D-alanine biosynthesis; D-alanine from L-alanine: step 1/1. Catalyzes the interconversion of L-alanine and D-alanine. May also act on other amino acids. The protein is Alanine racemase (alr) of Ruegeria sp. (strain TM1040) (Silicibacter sp.).